The sequence spans 397 residues: MTTSQFKKSKLIENNSQSLEILKEKNFNDVPLDVAIEIFMRLPVKSVARFLLLSKFWAEIIRSRHFITSFQVRSSLQPRLLVVFIDLNKQWNCEDWYFFSLSSSTTSYLSRVTCPFPDYVHYSHYVNGLISHGYGLEKFITNPSTGKSTVLGRVQTNSKVAQCFLGYDPVNDEYKLLVLCMKEKMQRHDGRTRILQLSSQHQVFPLGVKKKPWRMIDYTTPHGPVLNSVCIDGVLYYVAFTGEDLSQLSLMRFDLGSEKLDLFTSLPADFPAAFLHGFTLMRYKGKVALATKTLFIGIEVWVLDQQAEIHGWLKKSFSIKGVRRWLFCDLFITGTTHTGEFILAPRFYSNSFYVIYYNPDTKSLRKTKVEVHGGYDFKHRETKAMVFPDYVETVRLL.

Residues 24–70 enclose the F-box domain; sequence EKNFNDVPLDVAIEIFMRLPVKSVARFLLLSKFWAEIIRSRHFITSF.

In terms of assembly, part of a SCF (ASK-cullin-F-box) protein ligase complex. Interacts with ASK16.

It is found in the nucleus. It participates in protein modification; protein ubiquitination. In terms of biological role, component of SCF(ASK-cullin-F-box) E3 ubiquitin ligase complexes, which may mediate the ubiquitination and subsequent proteasomal degradation of target proteins. The polypeptide is F-box protein At4g11590 (Arabidopsis thaliana (Mouse-ear cress)).